We begin with the raw amino-acid sequence, 961 residues long: Retinoblastoma-like protein homolog lin-35 (961 aa).

Disordered stretches follow at residues 1-43 (MPKR…PPAK) and 55-129 (GGVQ…TPPP). Residues 68–81 (ELTQMTIKQETEGN) are compositionally biased toward polar residues. Acidic residues predominate over residues 107-119 (GEDDDYEEDDADS). S714 bears the Phosphoserine; by CDK4 mark. Position 719 is a phosphothreonine; by CDK4 (T719).

The protein belongs to the retinoblastoma protein (RB) family. As to quaternary structure, component of the DRM complex, at least composed of lin-9, lin-35, lin-37, lin-52, lin-53, lin-54, dpl-1 and efl-1. Interacts with lin-53. Interacts (via C-terminus) with dpl-1 (via C-terminus) and efl-1 (via C-terminus). Interacts (via C-terminus) with lin-8. Phosphorylated by the cyclin dependent kinase cdk-4. Phosphorylation inhibits the transcriptional repressor activity of lin-35 and allows for progression through the G1 phase of the cell cycle during postembryonic development.

Its subcellular location is the nucleus. Key regulator of cell division which acts as a transcriptional repressor and negatively regulates cell cycle progression in its active unphosphorylated form, but allows cell cycle progression when phosphorylated. When unphosphorylated and in its active form, interacts with E2F transcription factors such as efl-1 to repress their transcriptional activity and negatively regulate the progression through the G1 phase of the cell cycle during postembryonic development. May furthermore act with cell cycle regulator cki-1 to negatively regulate cell cycle progression. Acts redundantly with lin-53, fzr-1 and lin-23 to control cell cycle progression by regulating the expression of G1 phase cyclins. In particular, negatively regulates the expression of the cyclin E homolog cye-1, which is essential for the G1/S phase transition. Regulates cell division in the intestinal lineage, repressing the expression of genes such as cdc-25.2, which are required for intestinal cells to transition from the karyokinesis cell cycle (also known as nuclear division) to endoreplication, a specific growth pathway in the intestinal epithelium required for feeding and gut development in growing larvae during the L1 stage molt. Its role as a transcriptional repressor in the regulation of intestinal cell division during postembryonic development is most likely in complex with an E2F cell cycle regulatory transcription factor efl-1 and its binding partner the synthetic multivulva class B protein dpl-1. Synthetic multivulva (synMuv) class B protein. SynMuv proteins are required to repress the induction of vulval development by Ras signaling and probably act by forming the multiprotein DRM complex that represses transcription. Together with synMuv class B protein lin-53, and redundantly with synMuv class A protein lin-15A, represses transcription to control vulval development, most likely through antagonization of the Ras-signaling pathway in the major hypodermal syncytium hyp7. Acts redundantly with the transcriptional corepressor spr-1 and the zinc finger protein zfp-2 to play a role in vulval morphogenesis, promote germline proliferation and somatic gonad development. Acts redundantly with ubc-18 in the regulation of pharyngeal morphogenesis during embryonic development by negatively regulating the expression of proteins such as sup-35. Functions with the SWI/SNF complex and proteins such as pha-1 to regulate larval development. Functions redundantly with xnp-1 to regulate somatic gonad development. Acts redundantly with slr-2 to regulate the expression of intestinal genes required for nutrient utilization. Regulates transcription in response to starvation. Furthermore, in response to starvation, promotes germ cell programmed cell death by negatively regulating the expression of the anti-apoptotic protein ced-9. Conversely, in conjunction with mcd-1, efl-1 and the synthetic multivulva class B proteins dpl-1, lin-37 and lin-52, may also regulate transcription to promote programmed cell death independently of ced-1, ced-8 and ced-9 cell death pathways. Directly involved in heterochromatin formation by maintaining overall chromatin structure and, in particular, that of constitutive heterochromatin by stabilizing histone methylation. In particular, negatively regulates the expression of mes-4, a histone methyltransferase that controls the expression of germline specific genes. May play a role in double strand break formation during meiosis. May suppress sensitivity to RNAi. May play a role in the response to endoplasmic reticulum (ER) stress. This Caenorhabditis elegans protein is Retinoblastoma-like protein homolog lin-35.